The following is a 315-amino-acid chain: Putative ankyrin repeat protein R600 (315 aa).

5 ANK repeats span residues 79 to 108 (NECRYFRMAVYNNSYDIAKYLLENGANVHV), 118 to 152 (SGFGKFYVFHSEKKEKRDTVELVKLLIDYNAMVGT), 153 to 182 (DTCNLVHTAIDANRLDVVKILVENGADIFS), 184 to 211 (QSKLLKSAVMYNYDILEYLISQGIDVTD), and 212 to 240 (DNNSVLKFAVSRGYDCVDLLLDAGADMNT).

The sequence is that of Putative ankyrin repeat protein R600 from Acanthamoeba polyphaga mimivirus (APMV).